Reading from the N-terminus, the 335-residue chain is MRHCISVLGAGSWGTALALLIARNGVPTLLWSHRREHAEAMAAERRNAHYLPHATFPDTLSVTPDLAEAAATASDAVLVAVPSHAFRATLDLCAPHLQPEAGLMWATKGLDRTRGCLLHETAREILGPDRALAVLSGPTFAAEVVAELPSAITVGASSEAFGAKIVSWLHNAYFRAYTTDDLIGAQLGGACKNVLAIAAGISDGLGFGANARAALITRGLAEMMRLSLALGARTETLMGLAGVGDLVLTATDNQSRNRRFGLGVGKGRPREEIHAEIGQEIEGILAARLIHELAGRKGVDMPITAQTYRVLYEGLPPEEAVRNLLLRDPKPEWDR.

NADPH contacts are provided by Ser12, Trp13, His33, Arg34, and Lys108. Sn-glycerol 3-phosphate is bound by residues Lys108, Gly137, and Thr139. Ala141 is an NADPH binding site. Positions 192, 245, 255, 256, and 257 each coordinate sn-glycerol 3-phosphate. Lys192 functions as the Proton acceptor in the catalytic mechanism. Arg256 is an NADPH binding site. Glu282 provides a ligand contact to NADPH.

This sequence belongs to the NAD-dependent glycerol-3-phosphate dehydrogenase family.

The protein localises to the cytoplasm. It carries out the reaction sn-glycerol 3-phosphate + NAD(+) = dihydroxyacetone phosphate + NADH + H(+). The catalysed reaction is sn-glycerol 3-phosphate + NADP(+) = dihydroxyacetone phosphate + NADPH + H(+). It participates in membrane lipid metabolism; glycerophospholipid metabolism. Functionally, catalyzes the reduction of the glycolytic intermediate dihydroxyacetone phosphate (DHAP) to sn-glycerol 3-phosphate (G3P), the key precursor for phospholipid synthesis. This is Glycerol-3-phosphate dehydrogenase [NAD(P)+] from Methylococcus capsulatus (strain ATCC 33009 / NCIMB 11132 / Bath).